The sequence spans 840 residues: Leucine-zipper-like transcriptional regulator 1 (840 aa).

A2 carries the post-translational modification N-acetylalanine. Kelch repeat units lie at residues 79–128, 130–185, 187–238, 239–285, 295–341, and 399–450; these read AIYV…VYGS, MFVF…VYSD, LWIF…VRRD, KMFV…QRRY, HLYV…PERA, and AMYI…FVLG. The disordered stretch occupies residues 329–353; sequence DSEVGGAEVPERACASEEVPTLTSE. BTB domains lie at 443-537 and 667-736; these read CDVE…KYPR and CDIT…NMPP.

It belongs to the LZTR1 family. Homodimer. Component of the BCR(LZTR1) E3 ubiquitin ligase complex, at least composed of CUL3, LZTR1 and RBX1. Interacts with Ras (K-Ras/KRAS, N-Ras/NRAS and H-Ras/HRAS). Interacts with RAF1. Interacts with SHOC2. Interacts with PPP1CB. In terms of processing, phosphorylated on tyrosine upon induction of apoptosis, leading to its degradation by the proteasome.

It localises to the endomembrane system. The protein resides in the recycling endosome. Its subcellular location is the golgi apparatus. It participates in protein modification; protein ubiquitination. Its function is as follows. Substrate-specific adapter of a BCR (BTB-CUL3-RBX1) E3 ubiquitin-protein ligase complex that mediates ubiquitination of Ras (K-Ras/KRAS, N-Ras/NRAS and H-Ras/HRAS). Is a negative regulator of RAS-MAPK signaling that acts by controlling Ras levels and decreasing Ras association with membranes. The polypeptide is Leucine-zipper-like transcriptional regulator 1 (LZTR1) (Pongo abelii (Sumatran orangutan)).